The primary structure comprises 400 residues: MSESVRTNTSIWSKGMLSVIVAQFLSAFGDNALLFATLALLKTQFYPDWSQPVLQMVFVGAYILFAPFVGQIADSFAKGRVMMVANGLKLAGAAGICLGVNPFVGYTLVGIGAAAYSPAKYGILGELTTGDKLVKANGLMEASTIAAILLGSVAGGVLADWHVIAALVACALAYAGAVAANLFIPKLVAARPGQSWRLSAMTRSFFSACVVLWRNGETRFSLVGTGLFWGAGVTLRFLLVLWVPVALGITDNATPTYLNAMVAVGIVVGAGAAAKLVTLETVSRCMPAGILIGVVVAIFSLQHALLPAYALLLLIGMLGGFFVVPLNALLQERGKKSVGAGNAIAVQNLGENSAMLLMLGLYSLAVLVGVPAVAIGIGFGVLFALAIAALWIWQRRQASY.

The next 12 helical transmembrane spans lie at valine 19–alanine 39, valine 53–alanine 73, alanine 91–isoleucine 111, leucine 139–alanine 159, isoleucine 164–isoleucine 184, serine 195–tryptophan 213, leucine 227–leucine 247, tyrosine 257–valine 277, threonine 281–leucine 301, alanine 304–valine 324, asparagine 352–alanine 372, and valine 373–tryptophan 393.

The protein belongs to the major facilitator superfamily. LplT (TC 2.A.1.42) family.

The protein resides in the cell inner membrane. In terms of biological role, catalyzes the facilitated diffusion of 2-acyl-glycero-3-phosphoethanolamine (2-acyl-GPE) into the cell. This is Lysophospholipid transporter LplT from Salmonella heidelberg (strain SL476).